We begin with the raw amino-acid sequence, 293 residues long: Ribosomal protein L11 methyltransferase (293 aa).

Positions 145, 166, 188, and 230 each coordinate S-adenosyl-L-methionine.

It belongs to the methyltransferase superfamily. PrmA family.

It is found in the cytoplasm. The enzyme catalyses L-lysyl-[protein] + 3 S-adenosyl-L-methionine = N(6),N(6),N(6)-trimethyl-L-lysyl-[protein] + 3 S-adenosyl-L-homocysteine + 3 H(+). Methylates ribosomal protein L11. The polypeptide is Ribosomal protein L11 methyltransferase (Salmonella heidelberg (strain SL476)).